The primary structure comprises 271 residues: Putative phosphoenolpyruvate synthase regulatory protein (271 aa).

Position 151–158 (151–158 (GVSRSGKT)) interacts with ADP.

This sequence belongs to the pyruvate, phosphate/water dikinase regulatory protein family. PSRP subfamily.

It carries out the reaction [pyruvate, water dikinase] + ADP = [pyruvate, water dikinase]-phosphate + AMP + H(+). It catalyses the reaction [pyruvate, water dikinase]-phosphate + phosphate + H(+) = [pyruvate, water dikinase] + diphosphate. Its function is as follows. Bifunctional serine/threonine kinase and phosphorylase involved in the regulation of the phosphoenolpyruvate synthase (PEPS) by catalyzing its phosphorylation/dephosphorylation. The protein is Putative phosphoenolpyruvate synthase regulatory protein of Burkholderia ambifaria (strain MC40-6).